Here is a 338-residue protein sequence, read N- to C-terminus: Probable tRNA pseudouridine synthase B (338 aa).

Aspartate 80 serves as the catalytic Nucleophile. The 76-residue stretch at 247 to 322 folds into the PUA domain; sequence LPRIEIRDTA…IMVDTKRVLM (76 aa).

This sequence belongs to the pseudouridine synthase TruB family. Type 2 subfamily.

It carries out the reaction uridine(55) in tRNA = pseudouridine(55) in tRNA. In terms of biological role, could be responsible for synthesis of pseudouridine from uracil-55 in the psi GC loop of transfer RNAs. The chain is Probable tRNA pseudouridine synthase B from Methanopyrus kandleri (strain AV19 / DSM 6324 / JCM 9639 / NBRC 100938).